We begin with the raw amino-acid sequence, 696 residues long: GPI mannosyltransferase 4 (696 aa).

The next 6 membrane-spanning stretches (helical) occupy residues 100–120 (WQLE…IYTL), 125–142 (NDYC…RFEI), 149–169 (SSWI…EMAM), 185–205 (NTVV…ESIS), 227–247 (AMST…LFGA), and 338–358 (YVHL…ASLG).

The protein belongs to the glycosyltransferase 22 family. PIGZ subfamily.

It localises to the endoplasmic reticulum membrane. It functions in the pathway glycolipid biosynthesis; glycosylphosphatidylinositol-anchor biosynthesis. Its function is as follows. Mannosyltransferase involved in glycosylphosphatidylinositol-anchor biosynthesis. Transfers a fourth mannose to some trimannosyl-GPIs during GPI precursor assembly. The polypeptide is GPI mannosyltransferase 4 (Drosophila melanogaster (Fruit fly)).